The following is a 202-amino-acid chain: Holliday junction branch migration complex subunit RuvA (202 aa).

The tract at residues 1 to 62 is domain I; that stretch reads MYEYLHGLIT…DTAQTLYGFS (62 aa). The interval 63–141 is domain II; that stretch reads DFAEKQLFLK…DLAPATDDNT (79 aa). Residues 142–151 form a flexible linker region; that stretch reads LFTPEVAPTT. The interval 152 to 202 is domain III; sequence TENPQLADALAALTALGYRETAVKKITAQLRQFNGQTTNDYLSEGLRLLTK.

The protein belongs to the RuvA family. In terms of assembly, homotetramer. Forms an RuvA(8)-RuvB(12)-Holliday junction (HJ) complex. HJ DNA is sandwiched between 2 RuvA tetramers; dsDNA enters through RuvA and exits via RuvB. An RuvB hexamer assembles on each DNA strand where it exits the tetramer. Each RuvB hexamer is contacted by two RuvA subunits (via domain III) on 2 adjacent RuvB subunits; this complex drives branch migration. In the full resolvosome a probable DNA-RuvA(4)-RuvB(12)-RuvC(2) complex forms which resolves the HJ.

It is found in the cytoplasm. Its function is as follows. The RuvA-RuvB-RuvC complex processes Holliday junction (HJ) DNA during genetic recombination and DNA repair, while the RuvA-RuvB complex plays an important role in the rescue of blocked DNA replication forks via replication fork reversal (RFR). RuvA specifically binds to HJ cruciform DNA, conferring on it an open structure. The RuvB hexamer acts as an ATP-dependent pump, pulling dsDNA into and through the RuvAB complex. HJ branch migration allows RuvC to scan DNA until it finds its consensus sequence, where it cleaves and resolves the cruciform DNA. This chain is Holliday junction branch migration complex subunit RuvA, found in Levilactobacillus brevis (strain ATCC 367 / BCRC 12310 / CIP 105137 / JCM 1170 / LMG 11437 / NCIMB 947 / NCTC 947) (Lactobacillus brevis).